The sequence spans 253 residues: uncharacterized protein (253 aa).

This is an uncharacterized protein from Campylobacter jejuni subsp. jejuni serotype O:2 (strain ATCC 700819 / NCTC 11168).